Consider the following 601-residue polypeptide: Glutathione-regulated potassium-efflux system protein KefB (601 aa).

Transmembrane regions (helical) follow at residues 4-24, 29-49, 55-75, 87-107, 115-135, 152-172, 177-197, 207-227, 230-250, 268-288, 291-311, 324-344, and 356-376; these read SDFLLAGVLFLFAAVAAVPLA, IGAVLGYLLAGIAIGPWGLGF, EILHFSELGVVFLMFIIGLEL, IFGVGAAQVLLSAALLAGLLM, AAVVGGIGLAMSSTAMALQLM, VLLFQDLAVIPALALVPLLAG, HFDWMKIGMKVLAFVGMLIGG, FIAASGVREVFTAATLLLVLG, LFMDALGLSMALGTFIAGVLL, GLLLGLFFISVGMSLNLGVLY, LLWVVISVVVLVAVKILVLYL, MQFAGVLSQGGEFAFVLFSTA, and ALLLVTVTLSMMTTPLLMKLV. The RCK N-terminal domain maps to 400-519; that stretch reads KPQVIVVGFG…AGVTQFSRET (120 aa).

Belongs to the monovalent cation:proton antiporter 2 (CPA2) transporter (TC 2.A.37) family. KefB subfamily. In terms of assembly, interacts with the regulatory subunit KefG.

The protein resides in the cell inner membrane. Pore-forming subunit of a potassium efflux system that confers protection against electrophiles. Catalyzes K(+)/H(+) antiport. In Escherichia coli (strain SMS-3-5 / SECEC), this protein is Glutathione-regulated potassium-efflux system protein KefB.